A 169-amino-acid chain; its full sequence is MVEPTGIEDVQEYDENSEEYPAEYTTETPETVGETYIPTAVGPSLGTGRRKTAVARVRVVPGTGEWKINGKSLEEYFPNKVHQQLIKEPLATLGFEGAYDVFARLNGGGTSGQAGALRHGLARALAAMDPEHNRPPLKKAGFLTRDARKVERKKAGLKKARKAPQYSKR.

Disordered stretches follow at residues 1-29 and 128-169; these read MVEP…TETP and MDPE…YSKR. The segment covering 9 to 21 has biased composition (acidic residues); that stretch reads DVQEYDENSEEYP. Residues 150–169 show a composition bias toward basic residues; the sequence is VERKKAGLKKARKAPQYSKR.

It belongs to the universal ribosomal protein uS9 family.

The polypeptide is Small ribosomal subunit protein uS9 (Thermobifida fusca (strain YX)).